Reading from the N-terminus, the 488-residue chain is MTADGKIVIVGGGPVGSLAALYASHYHDNVEVYELRDERQNPAGASPLLQKSINFTLSERGIRALEKSGRTDLLRAIMRTAIPMHGRMVHGRMVHGRSVSGKLQETFHQYDVHGNSLYSLDRKALNIALRQELDATPNVKMFFHHKLIRADMNTRKVWFEQREDPSTSTSPSTSSTPKEVPFDFLIGADGAHSTTRQQIMRYTPLDYQQQYADTVWCELRIPPTEKTNSFRLPPNYLHIWPGGEYMFCAFPCPDQSFNCILFAPASRLDALKSSPPATLFDFFDTHFPGVCPDLISQSSLSQQFYQSPHLPLIGIKCSPHHLGSAAVIIGDAAHAMFPFYGQGLNAGMEDVRILFDLLDEHRVFGHGKSLDKDHARAAALTEYSNQRVRDAHAIHDLSRRNYLELRGGVNSPVYKARKFVEEALQRYVPLLGWRTLYSRVSFSDQRYSEVVVKNELQGWVLLLMSGLGVLLHVLVFGALGGAFLGLKR.

The protein belongs to the aromatic-ring hydroxylase family. KMO subfamily. FAD is required as a cofactor.

It is found in the mitochondrion outer membrane. The enzyme catalyses L-kynurenine + NADPH + O2 + H(+) = 3-hydroxy-L-kynurenine + NADP(+) + H2O. Its pathway is cofactor biosynthesis; NAD(+) biosynthesis; quinolinate from L-kynurenine: step 1/3. Its function is as follows. Catalyzes the hydroxylation of L-kynurenine (L-Kyn) to form 3-hydroxy-L-kynurenine (L-3OHKyn). Required for synthesis of quinolinic acid. The protein is Kynurenine 3-monooxygenase 2 (bna4-2) of Aspergillus niger (strain ATCC MYA-4892 / CBS 513.88 / FGSC A1513).